The chain runs to 383 residues: MSWQNKIDLGLQQRHEAAAYRCRQVNDGANGRWLQTGAQQYLNFSSNDYLGLSQDAAVIAAWQQGAQRYGVGSGGSGHVTGYSLPHAQLEQQLADWLGYPRALLFISGFAANQAVLTALTAADDRILADKLSHASLLEAATHSPAQLRRFAHNQPDSLQKLLNKPCSGQTLVVTEGVFSMDGDSAPLAAIQQHTAAAGGWLLVDDAHGLGVRGAAGRGSCELQGVKPELLVVTFSKAFGLSGAAVLCQEPVAEYLLQYARHLIYSTAMPPAQACALQAALLRIQQGDDLRQRLQQRITQFRCGAAALPLQLGASETAIQPLLVGDNQQTVALAEQLRAAGLWVTAIRPPTVPPGGARLRITLSAAHESEDIDRLLEVLHGVCH.

Arg-21 serves as a coordination point for substrate. Pyridoxal 5'-phosphate is bound at residue 108 to 109 (GF). His-133 contacts substrate. Pyridoxal 5'-phosphate-binding residues include Ser-179, His-207, and Thr-233. Position 236 is an N6-(pyridoxal phosphate)lysine (Lys-236). Thr-350 serves as a coordination point for substrate.

Belongs to the class-II pyridoxal-phosphate-dependent aminotransferase family. BioF subfamily. Homodimer. It depends on pyridoxal 5'-phosphate as a cofactor.

The enzyme catalyses 6-carboxyhexanoyl-[ACP] + L-alanine + H(+) = (8S)-8-amino-7-oxononanoate + holo-[ACP] + CO2. Its pathway is cofactor biosynthesis; biotin biosynthesis. In terms of biological role, catalyzes the decarboxylative condensation of pimeloyl-[acyl-carrier protein] and L-alanine to produce 8-amino-7-oxononanoate (AON), [acyl-carrier protein], and carbon dioxide. This Yersinia enterocolitica serotype O:8 / biotype 1B (strain NCTC 13174 / 8081) protein is 8-amino-7-oxononanoate synthase.